The chain runs to 131 residues: Lysosomal enzyme trafficking factor (131 aa).

2 consecutive transmembrane segments (helical) span residues Met8 to Phe28 and Leu66 to Leu86.

Belongs to the LYSET family.

Its subcellular location is the golgi apparatus membrane. In terms of biological role, required for mannose-6-phosphate-dependent trafficking of lysosomal enzymes. LYSET bridges GlcNAc-1-phosphate transferase (GNPTAB), to the membrane-bound transcription factor site-1 protease (MBTPS1), thus allowing proteolytic activation of the GNPTAB. GNPTAB is involved in the regulation of M6P-dependent Golgi-to-lysosome trafficking of lysosomal enzymes. LYSET is thus an essential factor for maturation and delivery of lysosomal hydrolases. The sequence is that of Lysosomal enzyme trafficking factor (lyset-b) from Xenopus laevis (African clawed frog).